A 210-amino-acid polypeptide reads, in one-letter code: MFIKICGIKTVEELKIVEKYADATGVILKSTSKREISFEKAKELIEIAKIPIYAVSTVNTYDDWAKIIEKTGTKYIQIHSNMDLNEIIKLKNNYNVNIIKAFKVPSISPNPEKDAENLINDIMQYDNIVDKILLDTGKGTGKTHDLRISKILSEKIDIVLAGGLNPYNVKEIVEIIKPCGVDLSSGVEKDNKKDEELIKLFIKNLKYNDK.

This sequence belongs to the TrpF family.

The enzyme catalyses N-(5-phospho-beta-D-ribosyl)anthranilate = 1-(2-carboxyphenylamino)-1-deoxy-D-ribulose 5-phosphate. The protein operates within amino-acid biosynthesis; L-tryptophan biosynthesis; L-tryptophan from chorismate: step 3/5. The chain is N-(5'-phosphoribosyl)anthranilate isomerase from Methanococcus aeolicus (strain ATCC BAA-1280 / DSM 17508 / OCM 812 / Nankai-3).